The primary structure comprises 244 residues: 3-deoxy-manno-octulosonate cytidylyltransferase (244 aa).

The protein belongs to the KdsB family.

The protein resides in the cytoplasm. It carries out the reaction 3-deoxy-alpha-D-manno-oct-2-ulosonate + CTP = CMP-3-deoxy-beta-D-manno-octulosonate + diphosphate. The protein operates within nucleotide-sugar biosynthesis; CMP-3-deoxy-D-manno-octulosonate biosynthesis; CMP-3-deoxy-D-manno-octulosonate from 3-deoxy-D-manno-octulosonate and CTP: step 1/1. It participates in bacterial outer membrane biogenesis; lipopolysaccharide biosynthesis. In terms of biological role, activates KDO (a required 8-carbon sugar) for incorporation into bacterial lipopolysaccharide in Gram-negative bacteria. The polypeptide is 3-deoxy-manno-octulosonate cytidylyltransferase (Anaeromyxobacter sp. (strain Fw109-5)).